A 142-amino-acid polypeptide reads, in one-letter code: Large ribosomal subunit protein uL13 (142 aa).

This sequence belongs to the universal ribosomal protein uL13 family. In terms of assembly, part of the 50S ribosomal subunit.

This protein is one of the early assembly proteins of the 50S ribosomal subunit, although it is not seen to bind rRNA by itself. It is important during the early stages of 50S assembly. The protein is Large ribosomal subunit protein uL13 of Vesicomyosocius okutanii subsp. Calyptogena okutanii (strain HA).